The following is a 209-amino-acid chain: Pyridoxine/pyridoxamine 5'-phosphate oxidase (209 aa).

Residues 7-10 (REDY) and Lys-64 contribute to the substrate site. FMN contacts are provided by residues 59–64 (RIVLLK), 74–75 (FT), Arg-80, and Lys-81. Residues Tyr-121, Arg-125, and Ser-129 each coordinate substrate. FMN-binding positions include 138 to 139 (QS) and Trp-182. 188-190 (RLH) is a substrate binding site. Arg-192 provides a ligand contact to FMN.

This sequence belongs to the pyridoxamine 5'-phosphate oxidase family. In terms of assembly, homodimer. It depends on FMN as a cofactor.

The enzyme catalyses pyridoxamine 5'-phosphate + O2 + H2O = pyridoxal 5'-phosphate + H2O2 + NH4(+). The catalysed reaction is pyridoxine 5'-phosphate + O2 = pyridoxal 5'-phosphate + H2O2. It functions in the pathway cofactor metabolism; pyridoxal 5'-phosphate salvage; pyridoxal 5'-phosphate from pyridoxamine 5'-phosphate: step 1/1. The protein operates within cofactor metabolism; pyridoxal 5'-phosphate salvage; pyridoxal 5'-phosphate from pyridoxine 5'-phosphate: step 1/1. Catalyzes the oxidation of either pyridoxine 5'-phosphate (PNP) or pyridoxamine 5'-phosphate (PMP) into pyridoxal 5'-phosphate (PLP). This is Pyridoxine/pyridoxamine 5'-phosphate oxidase from Actinobacillus pleuropneumoniae serotype 5b (strain L20).